The following is a 520-amino-acid chain: Acetylcholine receptor subunit delta (520 aa).

Positions 1–24 (MAGPVLTLGLLAALVVCALPGSWG) are cleaved as a signal peptide. Over 25 to 248 (LNEEQRLIQH…VTFYLIIRRK (224 aa)) the chain is Extracellular. N-linked (GlcNAc...) asparagine glycans are attached at residues Asn-100, Asn-167, and Asn-193. An intrachain disulfide couples Cys-154 to Cys-168. 3 helical membrane-spanning segments follow: residues 249–273 (PLFY…VFYL), 281–299 (TSVA…LLIS), and 315–336 (FLLF…VLNI). Residues 337-474 (HFRTPSTHVL…WNQVARTVDR (138 aa)) lie on the Cytoplasmic side of the membrane. A Phosphotyrosine; by Tyr-kinases modification is found at Tyr-393. The helical transmembrane segment at 475–493 (LCLFVVTPVMVVGTAWIFL) threads the bilayer.

This sequence belongs to the ligand-gated ion channel (TC 1.A.9) family. Acetylcholine receptor (TC 1.A.9.1) subfamily. Delta/CHRND sub-subfamily. As to quaternary structure, pentamer of two alpha chains, and one each of the beta, delta, and gamma (in immature muscle) or epsilon (in mature muscle) chains. The muscle heteropentamer composed of alpha-1, beta-1, delta, epsilon subunits interacts with the alpha-conotoxin ImII.

It is found in the postsynaptic cell membrane. The protein localises to the cell membrane. It catalyses the reaction K(+)(in) = K(+)(out). The catalysed reaction is Na(+)(in) = Na(+)(out). Functionally, after binding acetylcholine, the AChR responds by an extensive change in conformation that affects all subunits and leads to opening of an ion-conducting channel across the plasma membrane. In Mus musculus (Mouse), this protein is Acetylcholine receptor subunit delta (Chrnd).